The chain runs to 906 residues: DNA mismatch repair protein MutS (906 aa).

Position 656–663 (656–663 (GPNMAGKS)) interacts with ATP.

The protein belongs to the DNA mismatch repair MutS family.

In terms of biological role, this protein is involved in the repair of mismatches in DNA. It is possible that it carries out the mismatch recognition step. This protein has a weak ATPase activity. The protein is DNA mismatch repair protein MutS of Rhodopseudomonas palustris (strain BisA53).